The following is a 111-amino-acid chain: Small ribosomal subunit protein bS16 (111 aa).

This sequence belongs to the bacterial ribosomal protein bS16 family.

The sequence is that of Small ribosomal subunit protein bS16 from Rickettsia canadensis (strain McKiel).